A 370-amino-acid chain; its full sequence is Dual-specificity RNA methyltransferase RlmN (370 aa).

Glu-93 (proton acceptor) is an active-site residue. The 239-residue stretch at 99–337 (EEGRGTLCVS…VTTVRKTRGD (239 aa)) folds into the Radical SAM core domain. Cys-106 and Cys-343 are oxidised to a cystine. [4Fe-4S] cluster is bound by residues Cys-113, Cys-117, and Cys-120. S-adenosyl-L-methionine-binding positions include 167–168 (GE), Ser-199, 221–223 (SLH), and Asn-300. The active-site S-methylcysteine intermediate is Cys-343.

The protein belongs to the radical SAM superfamily. RlmN family. The cofactor is [4Fe-4S] cluster.

It localises to the cytoplasm. It carries out the reaction adenosine(2503) in 23S rRNA + 2 reduced [2Fe-2S]-[ferredoxin] + 2 S-adenosyl-L-methionine = 2-methyladenosine(2503) in 23S rRNA + 5'-deoxyadenosine + L-methionine + 2 oxidized [2Fe-2S]-[ferredoxin] + S-adenosyl-L-homocysteine. It catalyses the reaction adenosine(37) in tRNA + 2 reduced [2Fe-2S]-[ferredoxin] + 2 S-adenosyl-L-methionine = 2-methyladenosine(37) in tRNA + 5'-deoxyadenosine + L-methionine + 2 oxidized [2Fe-2S]-[ferredoxin] + S-adenosyl-L-homocysteine. Functionally, specifically methylates position 2 of adenine 2503 in 23S rRNA and position 2 of adenine 37 in tRNAs. m2A2503 modification seems to play a crucial role in the proofreading step occurring at the peptidyl transferase center and thus would serve to optimize ribosomal fidelity. This Francisella tularensis subsp. holarctica (strain LVS) protein is Dual-specificity RNA methyltransferase RlmN.